A 306-amino-acid chain; its full sequence is MTNPLYKKHVISISDLTRPDMELVVATAQRLKAEPDTRLLKDKLIASCFFEASTRTRLSFETAVQRLGGNIIGFADGGNTSAKKGETLADSIKIIGSYSDAVVMRHPKEGAARLASEFSRVPVINGGDGSNQHPTQTLLDLFSIHETQGKLDGLNVAFVGDLKYGRTVHSLAQALSLFNCRFFFISPDALAMPDYICEELEEKGIRFSVHETMEEVMPELDILYMTRVQKERFDETEYKHMAAKFVLELATLEGAKPTMKILHPLPRVDEIDVAVDKTPYAYYFQQAENGVYARQALLALVLNETV.

Residues arginine 55 and threonine 56 each coordinate carbamoyl phosphate. Lysine 84 serves as a coordination point for L-aspartate. The carbamoyl phosphate site is built by arginine 105, histidine 133, and glutamine 136. The L-aspartate site is built by arginine 166 and arginine 227. The carbamoyl phosphate site is built by leucine 265 and proline 266.

It belongs to the aspartate/ornithine carbamoyltransferase superfamily. ATCase family. In terms of assembly, heterododecamer (2C3:3R2) of six catalytic PyrB chains organized as two trimers (C3), and six regulatory PyrI chains organized as three dimers (R2).

The enzyme catalyses carbamoyl phosphate + L-aspartate = N-carbamoyl-L-aspartate + phosphate + H(+). It participates in pyrimidine metabolism; UMP biosynthesis via de novo pathway; (S)-dihydroorotate from bicarbonate: step 2/3. In terms of biological role, catalyzes the condensation of carbamoyl phosphate and aspartate to form carbamoyl aspartate and inorganic phosphate, the committed step in the de novo pyrimidine nucleotide biosynthesis pathway. In Aeromonas salmonicida (strain A449), this protein is Aspartate carbamoyltransferase catalytic subunit.